The following is a 373-amino-acid chain: Pollen allergen KBG 31 (373 aa).

Positions 1 to 28 (MDKANGAYKTALKAASAVAPAEKFPVFQ) are cleaved as a signal peptide.

The protein belongs to the Poa p IX/Phl p VI allergen family. In terms of tissue distribution, pollen.

This Poa pratensis (Kentucky bluegrass) protein is Pollen allergen KBG 31.